The following is a 313-amino-acid chain: Ribosomal RNA small subunit methyltransferase H (313 aa).

S-adenosyl-L-methionine is bound by residues 35–37 (GGH), D55, F80, D102, and Q109.

It belongs to the methyltransferase superfamily. RsmH family.

It is found in the cytoplasm. It carries out the reaction cytidine(1402) in 16S rRNA + S-adenosyl-L-methionine = N(4)-methylcytidine(1402) in 16S rRNA + S-adenosyl-L-homocysteine + H(+). Its function is as follows. Specifically methylates the N4 position of cytidine in position 1402 (C1402) of 16S rRNA. The sequence is that of Ribosomal RNA small subunit methyltransferase H from Shewanella frigidimarina (strain NCIMB 400).